A 534-amino-acid chain; its full sequence is Inosine-5'-monophosphate dehydrogenase (534 aa).

2 consecutive CBS domains span residues 117–181 (YVMQ…GTPI) and 190–255 (TTPI…PMAS). NAD(+) is bound by residues 292-294 (DSS) and 342-344 (GMG). The K(+) site is built by Gly-344 and Gly-346. Residue Ser-347 participates in IMP binding. K(+) is bound at residue Cys-349. Cys-349 serves as the catalytic Thioimidate intermediate. Residues 382–384 (DGG), 405–406 (GG), and 430–434 (YRGMG) contribute to the IMP site. Arg-448 serves as the catalytic Proton acceptor. Position 461 (Gln-461) interacts with IMP. Residues Glu-520, Gly-521, and Gly-522 each contribute to the K(+) site.

Belongs to the IMPDH/GMPR family. In terms of assembly, homotetramer. K(+) serves as cofactor.

Its subcellular location is the cytoplasm. It catalyses the reaction IMP + NAD(+) + H2O = XMP + NADH + H(+). Its pathway is purine metabolism; XMP biosynthesis via de novo pathway; XMP from IMP: step 1/1. With respect to regulation, mycophenolic acid (MPA) is a non-competitive inhibitor that prevents formation of the closed enzyme conformation by binding to the same site as the amobile flap. In contrast, mizoribine monophosphate (MZP) is a competitive inhibitor that induces the closed conformation. MPA is a potent inhibitor of mammalian IMPDHs but a poor inhibitor of the bacterial enzymes. MZP is a more potent inhibitor of bacterial IMPDH. Catalyzes the conversion of inosine 5'-phosphate (IMP) to xanthosine 5'-phosphate (XMP), the first committed and rate-limiting step in the de novo synthesis of guanine nucleotides, and therefore plays an important role in the regulation of cell growth. This chain is Inosine-5'-monophosphate dehydrogenase, found in Caenorhabditis elegans.